A 1024-amino-acid chain; its full sequence is Beta-galactosidase (1024 aa).

The substrate site is built by N103 and D202. D202 contributes to the Na(+) binding site. Mg(2+)-binding residues include E417, H419, and E462. Residues E462 and 538 to 541 each bind substrate; that span reads EYAH. E462 acts as the Proton donor in catalysis. E538 acts as the Nucleophile in catalysis. Residue N598 participates in Mg(2+) binding. 2 residues coordinate Na(+): F602 and N605. Residues N605 and W1000 each coordinate substrate.

It belongs to the glycosyl hydrolase 2 family. In terms of assembly, homotetramer. Requires Mg(2+) as cofactor. Na(+) serves as cofactor.

It catalyses the reaction Hydrolysis of terminal non-reducing beta-D-galactose residues in beta-D-galactosides.. The sequence is that of Beta-galactosidase from Shigella sonnei (strain Ss046).